A 333-amino-acid polypeptide reads, in one-letter code: Isoaspartyl peptidase/L-asparaginase (333 aa).

Residue Thr191 is the Nucleophile of the active site. Residues 219–222 (RVGD) and 242–245 (TGHG) contribute to the substrate site.

The protein belongs to the Ntn-hydrolase family. Heterodimer of an alpha and beta chain produced by autocleavage. This heterodimer may then dimerize in turn, giving rise to a heterotetramer. Cleaved into an alpha and beta chain by autocatalysis; this activates the enzyme. The N-terminal residue of the beta subunit is responsible for the nucleophile hydrolase activity. As to expression, present in testis, brain, liver, kidney, heart and skeletal muscle. In brain, specifically present in the astrocytic lineage. Present in sperm (at protein level).

The protein resides in the cytoplasm. The enzyme catalyses L-asparagine + H2O = L-aspartate + NH4(+). The catalysed reaction is Cleavage of a beta-linked Asp residue from the N-terminus of a polypeptide.. Has both L-asparaginase and beta-aspartyl peptidase activity. Is highly active with L-Asp beta-methyl ester. Besides, has catalytic activity toward beta-aspartyl dipeptides and their methyl esters, including beta-L-Asp-L-Phe, beta-L-Asp-L-Phe methyl ester (aspartame), beta-L-Asp-L-Ala, beta-L-Asp-L-Leu and beta-L-Asp-L-Lys. Does not have aspartylglucosaminidase activity and is inactive toward GlcNAc-L-Asn. Likewise, has no activity toward glutamine. May be involved in the production of L-aspartate, which can act as an excitatory neurotransmitter in some brain regions. The polypeptide is Isoaspartyl peptidase/L-asparaginase (Asrgl1) (Rattus norvegicus (Rat)).